The sequence spans 72 residues: Translation initiation factor IF-1 (72 aa).

Residues 1-72 (MSKDDCIEFE…TKGRIIYRMK (72 aa)) form the S1-like domain.

It belongs to the IF-1 family. In terms of assembly, component of the 30S ribosomal translation pre-initiation complex which assembles on the 30S ribosome in the order IF-2 and IF-3, IF-1 and N-formylmethionyl-tRNA(fMet); mRNA recruitment can occur at any time during PIC assembly.

It localises to the cytoplasm. Its function is as follows. One of the essential components for the initiation of protein synthesis. Stabilizes the binding of IF-2 and IF-3 on the 30S subunit to which N-formylmethionyl-tRNA(fMet) subsequently binds. Helps modulate mRNA selection, yielding the 30S pre-initiation complex (PIC). Upon addition of the 50S ribosomal subunit IF-1, IF-2 and IF-3 are released leaving the mature 70S translation initiation complex. This Xylella fastidiosa (strain Temecula1 / ATCC 700964) protein is Translation initiation factor IF-1.